We begin with the raw amino-acid sequence, 152 residues long: 3-hydroxyacyl-[acyl-carrier-protein] dehydratase FabZ (152 aa).

His-57 is a catalytic residue.

The protein belongs to the thioester dehydratase family. FabZ subfamily.

It is found in the cytoplasm. The enzyme catalyses a (3R)-hydroxyacyl-[ACP] = a (2E)-enoyl-[ACP] + H2O. In terms of biological role, involved in unsaturated fatty acids biosynthesis. Catalyzes the dehydration of short chain beta-hydroxyacyl-ACPs and long chain saturated and unsaturated beta-hydroxyacyl-ACPs. This chain is 3-hydroxyacyl-[acyl-carrier-protein] dehydratase FabZ, found in Xanthomonas axonopodis pv. citri (strain 306).